A 65-amino-acid polypeptide reads, in one-letter code: Metallothionein-like protein 3B (65 aa).

This sequence belongs to the metallothionein superfamily. Type 15 family.

Its function is as follows. Metallothioneins have a high content of cysteine residues that bind various heavy metals. The sequence is that of Metallothionein-like protein 3B (MT3B) from Oryza sativa subsp. indica (Rice).